Here is a 237-residue protein sequence, read N- to C-terminus: Uridylate kinase (237 aa).

ATP is bound at residue 11–14; sequence KLSG. Gly-53 lines the UMP pocket. 2 residues coordinate ATP: Gly-54 and Arg-58. UMP-binding positions include Asp-73 and 134–141; that span reads TGNPFFTT. Residues Thr-161, Tyr-167, and Asp-170 each coordinate ATP.

It belongs to the UMP kinase family. As to quaternary structure, homohexamer.

It localises to the cytoplasm. The catalysed reaction is UMP + ATP = UDP + ADP. It functions in the pathway pyrimidine metabolism; CTP biosynthesis via de novo pathway; UDP from UMP (UMPK route): step 1/1. Inhibited by UTP. Functionally, catalyzes the reversible phosphorylation of UMP to UDP. In Nitrosomonas europaea (strain ATCC 19718 / CIP 103999 / KCTC 2705 / NBRC 14298), this protein is Uridylate kinase.